A 726-amino-acid chain; its full sequence is Catalase-peroxidase (726 aa).

A disordered region spans residues 1-33 (MSTTDDTHNTLSAGKCPFHQGGHDRSAGAGTAS). Residues 105–226 (WHGAGTYRSI…LGATEMGLIY (122 aa)) constitute a cross-link (tryptophyl-tyrosyl-methioninium (Trp-Tyr) (with M-252)). Histidine 106 serves as the catalytic Proton acceptor. A cross-link (tryptophyl-tyrosyl-methioninium (Tyr-Met) (with W-105)) is located at residues 226–252 (YVNPEGPDHSGEPLSAAAAIRATFGNM). Histidine 267 provides a ligand contact to heme b.

This sequence belongs to the peroxidase family. Peroxidase/catalase subfamily. Homodimer or homotetramer. Heme b is required as a cofactor. In terms of processing, formation of the three residue Trp-Tyr-Met cross-link is important for the catalase, but not the peroxidase activity of the enzyme.

It catalyses the reaction H2O2 + AH2 = A + 2 H2O. It carries out the reaction 2 H2O2 = O2 + 2 H2O. In terms of biological role, bifunctional enzyme with both catalase and broad-spectrum peroxidase activity. The polypeptide is Catalase-peroxidase (Salmonella arizonae (strain ATCC BAA-731 / CDC346-86 / RSK2980)).